The sequence spans 479 residues: Ribulose bisphosphate carboxylase large chain (479 aa).

Positions 1 to 2 are excised as a propeptide; the sequence is MS. Substrate is bound by residues N123 and T173. The active-site Proton acceptor is the K175. Substrate is bound at residue K177. Positions 201, 203, and 204 each coordinate Mg(2+). K201 is modified (N6-carboxylysine). The residue at position 208 (S208) is a Phosphoserine. The active-site Proton acceptor is H294. Substrate contacts are provided by R295 and H327. T330 carries the phosphothreonine modification. S379 lines the substrate pocket.

Belongs to the RuBisCO large chain family. Type I subfamily. In terms of assembly, heterohexadecamer of 8 large chains and 8 small chains; disulfide-linked. The disulfide link is formed within the large subunit homodimers. Requires Mg(2+) as cofactor. In terms of processing, the disulfide bond which can form in the large chain dimeric partners within the hexadecamer appears to be associated with oxidative stress and protein turnover.

Its subcellular location is the plastid. The protein resides in the chloroplast. The catalysed reaction is 2 (2R)-3-phosphoglycerate + 2 H(+) = D-ribulose 1,5-bisphosphate + CO2 + H2O. It catalyses the reaction D-ribulose 1,5-bisphosphate + O2 = 2-phosphoglycolate + (2R)-3-phosphoglycerate + 2 H(+). In terms of biological role, ruBisCO catalyzes two reactions: the carboxylation of D-ribulose 1,5-bisphosphate, the primary event in carbon dioxide fixation, as well as the oxidative fragmentation of the pentose substrate in the photorespiration process. Both reactions occur simultaneously and in competition at the same active site. This Lobularia maritima (Sweet alyssum) protein is Ribulose bisphosphate carboxylase large chain.